The following is a 150-amino-acid chain: UPF0039 protein C11D3.02c (150 aa).

An N-acetyltransferase domain is found at 9–150 (KYFNSLDVKE…IPHVEMRLEL (142 aa)).

This sequence belongs to the UPF0039 (ElaA) family.

This is UPF0039 protein C11D3.02c from Schizosaccharomyces pombe (strain 972 / ATCC 24843) (Fission yeast).